Here is a 173-residue protein sequence, read N- to C-terminus: NADH-ubiquinone oxidoreductase chain 6 (173 aa).

The next 5 membrane-spanning stretches (helical) occupy residues 1-21 (MTYF…AVAS), 27-47 (YGVV…LSLG), 48-68 (VSFV…VVFV), 87-107 (VVGY…VGGF), and 139-159 (CGVG…FVVL).

This sequence belongs to the complex I subunit 6 family.

It localises to the mitochondrion membrane. It catalyses the reaction a ubiquinone + NADH + 5 H(+)(in) = a ubiquinol + NAD(+) + 4 H(+)(out). In terms of biological role, core subunit of the mitochondrial membrane respiratory chain NADH dehydrogenase (Complex I) that is believed to belong to the minimal assembly required for catalysis. Complex I functions in the transfer of electrons from NADH to the respiratory chain. The immediate electron acceptor for the enzyme is believed to be ubiquinone. The protein is NADH-ubiquinone oxidoreductase chain 6 (MT-ND6) of Ptychoramphus aleuticus (Cassin's auklet).